The primary structure comprises 1121 residues: Pleckstrin homology domain-containing family A member 7 (1121 aa).

WW domains follow at residues 9–42 and 54–87; these read DTLPEHWSYGVCRDGRVFFINDQLRCTTWLHPRT and SDLPRGWEEGFTEEGASYFIDHNQQTTAFRHPVT. Residues 105–137 are disordered; sequence PHMSKQDRNQRPSSMVSETSTAGTASTLEAKPG. Residues 115–131 are compositionally biased toward polar residues; that stretch reads RPSSMVSETSTAGTAST. Positions 164 to 282 constitute a PH domain; it reads PVVVRGWLHK…WVRAMNQAAQ (119 aa). Residues 299–514 are disordered; sequence QAVPQANHTE…LKMSSEERRA (216 aa). Basic and acidic residues-rich tracts occupy residues 308-356 and 437-446; these read ESCH…EGKR and HWARAQKGDS. A compositionally biased stretch (polar residues) spans 460-475; the sequence is PGQSLSFPENYQTLPK. A compositionally biased stretch (basic and acidic residues) spans 497–514; the sequence is YAQDRASHLKMSSEERRA. Phosphoserine is present on residues Ser536, Ser545, Ser569, Ser604, Ser608, and Ser612. Positions 538–696 are interaction with CTNND1; sequence TAPICLGSPE…AESDTDVKLS (159 aa). The interval 547-632 is disordered; the sequence is EFTDQGRSRS…NSSHVDRRSM (86 aa). Pro residues predominate over residues 567–582; sequence PPSPSDIPPPGPPRVF. The segment covering 589-605 has biased composition (basic and acidic residues); the sequence is TPAERVTVKPPDQRRSV. Residues 700-801 adopt a coiled-coil conformation; it reads EQDRVLQDLE…LQEQHRRAFF (102 aa). 2 disordered regions span residues 841–876 and 888–971; these read RKTVPLFPHPPVPSLSTSESKPPPQPSPPTSPVRTP and YVPY…ELGQ. Phosphoserine occurs at positions 858, 860, and 867. The span at 861-871 shows a compositional bias: pro residues; sequence KPPPQPSPPTS. Thr870 is subject to Phosphothreonine. Phosphoserine occurs at positions 871, 903, and 907. The segment covering 933-942 has biased composition (pro residues); the sequence is DQPPAVPPLP. Positions 958-969 are enriched in basic and acidic residues; it reads RQSDERKRDREL. Ser986 bears the Phosphoserine mark. Disordered stretches follow at residues 1003–1028 and 1082–1121; these read GLVGPESRYQTLPGRGLSGSTSRLQQ and RHQKALVRERKRTLGQGERTGLPSSRYLSRPLPGDLGSVC. Positions 1067-1094 form a coiled coil; sequence QRGKMSAEEQLERMKRHQKALVRERKRT. Positions 1082 to 1094 are enriched in basic residues; it reads RHQKALVRERKRT.

As to quaternary structure, interacts with CAMSAP3 and CTNND1. Interacts (via WW domains) with TSPAN33 (via cytoplasmic domain) and with PDZD11; the interaction with TSPAN33 is dependent on PDZD11 being bound to PLEKHA7 and facilitates the docking of ADAM10 to zonula adherens through interaction of TSPAN33 with ADAM10.

The protein resides in the cell junction. It localises to the adherens junction. The protein localises to the cytoplasm. It is found in the cytoskeleton. Its subcellular location is the microtubule organizing center. The protein resides in the centrosome. Required for zonula adherens biogenesis and maintenance. Acts via its interaction with CAMSAP3, which anchors microtubules at their minus-ends to zonula adherens, leading to the recruitment of KIFC3 kinesin to the junctional site. Mediates docking of ADAM10 to zonula adherens through a PDZD11-dependent interaction with the ADAM10-binding protein TSPAN33. In Homo sapiens (Human), this protein is Pleckstrin homology domain-containing family A member 7 (PLEKHA7).